Reading from the N-terminus, the 428-residue chain is Enolase (428 aa).

Glutamine 163 is a binding site for (2R)-2-phosphoglycerate. The active-site Proton donor is glutamate 205. Residues aspartate 242, glutamate 285, and aspartate 312 each coordinate Mg(2+). (2R)-2-phosphoglycerate-binding residues include lysine 337, arginine 366, serine 367, and lysine 388. Lysine 337 (proton acceptor) is an active-site residue.

The protein belongs to the enolase family. The cofactor is Mg(2+).

Its subcellular location is the cytoplasm. It is found in the secreted. It localises to the cell surface. The enzyme catalyses (2R)-2-phosphoglycerate = phosphoenolpyruvate + H2O. Its pathway is carbohydrate degradation; glycolysis; pyruvate from D-glyceraldehyde 3-phosphate: step 4/5. Functionally, catalyzes the reversible conversion of 2-phosphoglycerate (2-PG) into phosphoenolpyruvate (PEP). It is essential for the degradation of carbohydrates via glycolysis. This chain is Enolase, found in Finegoldia magna (strain ATCC 29328 / DSM 20472 / WAL 2508) (Peptostreptococcus magnus).